The sequence spans 491 residues: Probable protein phosphatase 2C 52 (491 aa).

Over residues 1-11 the composition is skewed to basic and acidic residues; sequence MVYDGAVKDQE. A disordered region spans residues 1 to 211; it reads MVYDGAVKDQ…REREKERERV (211 aa). The segment covering 12–54 has biased composition (low complexity); sequence SSANPASASAALSEASAAASEVTAAAAAGAGAGAAEEGAAVSG. Positions 66–78 are enriched in basic residues; it reads GVRHPLKHRRFRA. A compositionally biased stretch (acidic residues) spans 95 to 105; that stretch reads VADEEASEVEQ. The span at 187 to 211 shows a compositional bias: basic and acidic residues; sequence VEEKKHKDQENKHKEREREKERERV. The 247-residue stretch at 229 to 475 folds into the PPM-type phosphatase domain; it reads SCGYSSFRGK…DNITCIVVKF (247 aa). Residues D265, G266, D427, and D466 each coordinate Mn(2+).

It belongs to the PP2C family. The cofactor is Mg(2+). Mn(2+) serves as cofactor.

It catalyses the reaction O-phospho-L-seryl-[protein] + H2O = L-seryl-[protein] + phosphate. The enzyme catalyses O-phospho-L-threonyl-[protein] + H2O = L-threonyl-[protein] + phosphate. This chain is Probable protein phosphatase 2C 52, found in Oryza sativa subsp. japonica (Rice).